The chain runs to 198 residues: Nucleoside triphosphate pyrophosphatase (198 aa).

The active-site Proton acceptor is Asp-72.

Belongs to the Maf family. Requires a divalent metal cation as cofactor.

It localises to the cytoplasm. It catalyses the reaction a ribonucleoside 5'-triphosphate + H2O = a ribonucleoside 5'-phosphate + diphosphate + H(+). The enzyme catalyses a 2'-deoxyribonucleoside 5'-triphosphate + H2O = a 2'-deoxyribonucleoside 5'-phosphate + diphosphate + H(+). Its function is as follows. Nucleoside triphosphate pyrophosphatase. May have a dual role in cell division arrest and in preventing the incorporation of modified nucleotides into cellular nucleic acids. This chain is Nucleoside triphosphate pyrophosphatase, found in Acinetobacter baylyi (strain ATCC 33305 / BD413 / ADP1).